Here is a 646-residue protein sequence, read N- to C-terminus: MRLTTKFSAFVTLLTGLTIFVTLLGCSLSFYNAIQYKFSHRVQAVATAIDTHLVSNDFSVLRPQITELMMSADIVRVDLLHGDKQVYTLARNGSYRPVGSSDLFRELSVPLIKHPGMSLRLVYQDPMGNYFHSLMTTAPLTGAIGFIIVMLFLAVRWLQRQLAGQELLETRATRILNGERGSNVLGTIYEWPPRTSSALDTLLREIQNAREQHSRLDTLIRSYAAQDVKTGLNNRLFFDNQLATLLEDQEKVGTHGIVMMIRLPDFNMLSDTWGHSQVEEQFFTLTNLLSTFMMRYPGALLARYHRSDFAALLPHRTLKEAESIAGQLIKAVDTLPNNKMLDRDDMIHIGICAWRSGQDTEQVMEHAESATRNAGLQGGNSWAIYDDSLPEKGRGNVRWRTLIEQMLSRGGPRLYQKPAVTREGQVHHRELMCRIFDGNEEVSSAEYMPMVLQFGLSEEYDRLQISRLIPLLRYWPEENLAIQVTVESLIRPRFQRWLRDTLMQCEKSQRKRIIIELAEADVGQHISRLQPVIRLVNALGVRVAVNQAGLTLVSTSWIKELNVELLKLHPGLVRNIEKRTENQLLVQSLVEACSGTSTQVYATGVRSRSEWQTLIQRGVTGGQGDFFASSQPLDTNVKKYSQRYSV.

Transmembrane regions (helical) follow at residues Phe-10–Phe-30 and Met-135–Val-155. The segment at Phe-152–Leu-219 is HAMP-like. Positions Arg-194–Ala-224 form a coiled coil. One can recognise a GGDEF domain in the interval Thr-254 to Asp-387. Residues Asn-396–Tyr-644 enclose the EAL domain.

It is found in the cell membrane. Its function is as follows. Serves as a specificity factor required for RNase E-mediated decay of the small global regulatory RNAs CsrB and CsrC, it is probably not a nuclease. Nor does its activity involve c-di-GMP, despite its domain composition. Positively modulates motility gene expression, is also required for curli expression. The polypeptide is RNase E specificity factor CsrD (csrD) (Escherichia coli (strain K12)).